We begin with the raw amino-acid sequence, 225 residues long: Enolase-phosphatase E1 (225 aa).

Belongs to the HAD-like hydrolase superfamily. MasA/MtnC family. Monomer. It depends on Mg(2+) as a cofactor.

It carries out the reaction 5-methylsulfanyl-2,3-dioxopentyl phosphate + H2O = 1,2-dihydroxy-5-(methylsulfanyl)pent-1-en-3-one + phosphate. Its pathway is amino-acid biosynthesis; L-methionine biosynthesis via salvage pathway; L-methionine from S-methyl-5-thio-alpha-D-ribose 1-phosphate: step 3/6. It functions in the pathway amino-acid biosynthesis; L-methionine biosynthesis via salvage pathway; L-methionine from S-methyl-5-thio-alpha-D-ribose 1-phosphate: step 4/6. In terms of biological role, bifunctional enzyme that catalyzes the enolization of 2,3-diketo-5-methylthiopentyl-1-phosphate (DK-MTP-1-P) into the intermediate 2-hydroxy-3-keto-5-methylthiopentenyl-1-phosphate (HK-MTPenyl-1-P), which is then dephosphorylated to form the acireductone 1,2-dihydroxy-3-keto-5-methylthiopentene (DHK-MTPene). This is Enolase-phosphatase E1 from Shewanella halifaxensis (strain HAW-EB4).